We begin with the raw amino-acid sequence, 1574 residues long: Disco-interacting protein 2 homolog B (1574 aa).

A phosphoserine mark is found at Ser9, Ser50, and Ser53. The DMAP1-binding domain maps to 12 to 130 (AVAALPPEVR…PMPTKRRSTF (119 aa)). Residues 31–166 (LSEGDITQKG…AALSAALQQS (136 aa)) form a disordered region. Polar residues predominate over residues 52–62 (YSPQTQETDSI). Residues 69-82 (QTPAPTAAQTSAPS) are compositionally biased toward low complexity. Thr70 is subject to Phosphothreonine. The segment covering 91–103 (GARDERYRSDIHT) has biased composition (basic and acidic residues). Position 99 is a phosphoserine (Ser99). At Thr139 the chain carries Phosphothreonine. Phosphoserine occurs at positions 145, 147, and 152. Positions 154–166 (RRQAALSAALQQS) are enriched in low complexity. Phosphoserine occurs at positions 177, 192, and 202. A disordered region spans residues 178-200 (IQGSSTSSSASSTLSHGEVKGTS). Over residues 181–192 (SSTSSSASSTLS) the composition is skewed to low complexity. The disordered stretch occupies residues 217-244 (APPDVTATTSSSSSSLRPANIDLPPSGI). Phosphoserine is present on Ser256.

It belongs to the DIP2 family. In terms of assembly, interacts with alpha-tubulin. Highly expressed in brain and spinal cord (at protein level). In brain, expression is detected in the main olfactory bulb, cortex, lateral ventricle, cornu ammonis 1, cornu ammonis 3, dentate gyrus, striatum, cerebellar cortex and medial habenula. Expressed primarily in neurons including excitatory pyramidal neurons and inhibitory interneurons.

The protein resides in the cell projection. The protein localises to the dendrite. Its subcellular location is the axon. It localises to the perikaryon. Its function is as follows. Negatively regulates axonal outgrowth and is essential for normal synaptic transmission. Not required for regulation of axon polarity. Promotes acetylation of alpha-tubulin. The chain is Disco-interacting protein 2 homolog B (Dip2b) from Mus musculus (Mouse).